The chain runs to 238 residues: 2-C-methyl-D-erythritol 4-phosphate cytidylyltransferase (238 aa).

It belongs to the IspD/TarI cytidylyltransferase family. IspD subfamily.

The catalysed reaction is 2-C-methyl-D-erythritol 4-phosphate + CTP + H(+) = 4-CDP-2-C-methyl-D-erythritol + diphosphate. Its pathway is isoprenoid biosynthesis; isopentenyl diphosphate biosynthesis via DXP pathway; isopentenyl diphosphate from 1-deoxy-D-xylulose 5-phosphate: step 2/6. Functionally, catalyzes the formation of 4-diphosphocytidyl-2-C-methyl-D-erythritol from CTP and 2-C-methyl-D-erythritol 4-phosphate (MEP). The protein is 2-C-methyl-D-erythritol 4-phosphate cytidylyltransferase of Leptospira interrogans serogroup Icterohaemorrhagiae serovar copenhageni (strain Fiocruz L1-130).